The following is a 512-amino-acid chain: Na(+)/H(+) antiporter NhaB (512 aa).

11 consecutive transmembrane segments (helical) span residues 28–48 (FLIINPLVFIFQPFMAGWLLV), 52–72 (IFTLAMALKCYPLLPGGLLAI), 97–117 (LLLMFMVAGIYFMKQLLLFIF), 144–164 (FLDALTVVAVVISVAIGFYGI), 201–221 (LMMHAGVGTALGGVMTMVGEP), 237–257 (FFLRVAPVSVPVFICGMLTCF), 296–330 (LALIAQGIIGAWLIFALAFHLAEVGLIGLSVIILA), 347–367 (TEALPFTALLAVFFAIVAVII), 390–410 (LFYLFNGLLSSISDNVFVGSV), 446–466 (ATPNGQAAFLFLLTSALAPLI), and 474–494 (VWMALPYTVVLTLVGLLCVKF).

The protein belongs to the NhaB Na(+)/H(+) (TC 2.A.34) antiporter family.

Its subcellular location is the cell inner membrane. The enzyme catalyses 2 Na(+)(in) + 3 H(+)(out) = 2 Na(+)(out) + 3 H(+)(in). Its function is as follows. Na(+)/H(+) antiporter that extrudes sodium in exchange for external protons. The sequence is that of Na(+)/H(+) antiporter NhaB from Enterobacter sp. (strain 638).